Here is a 547-residue protein sequence, read N- to C-terminus: Kelch repeat and BTB domain-containing protein 2 (547 aa).

In terms of domain architecture, BTB spans 20–89 (CDVIITIGDG…LYNRHISSMN (70 aa)). Kelch repeat units lie at residues 295–342 (DIII…VIDD), 343–389 (TIYA…VLDQ), and 391–454 (IYII…SHKD).

As to quaternary structure, interacts (via BTB domain) with host CUL3.

It is found in the host cytoplasm. Functionally, probable substrate-specific adapter of CUL3-containing E3 ubiquitin-protein ligases which mediate the ubiquitination and subsequent proteasomal degradation of host target proteins. In Bos taurus (Bovine), this protein is Kelch repeat and BTB domain-containing protein 2 (KBTB2).